The following is a 153-amino-acid chain: RNA-binding protein 3 (153 aa).

An RRM domain is found at 6-84; sequence GKLFVGGLNF…RQIRVDHAGK (79 aa). Arg47 bears the Omega-N-methylarginine mark. Residues 81–153 are disordered; it reads HAGKSARGSR…GGNYRDNYDN (73 aa). The segment covering 89–112 has biased composition (gly residues); that stretch reads SRGGAFGGRGRSYSRGGGDQGYGS. The residue at position 103 (Arg103) is an Asymmetric dimethylarginine; alternate. A Dimethylated arginine; alternate modification is found at Arg103. Arg103 is modified (omega-N-methylarginine; alternate). Omega-N-methylarginine occurs at positions 118 and 128. Phosphoserine is present on residues Ser133 and Ser143. Tyr151 carries the phosphotyrosine modification.

As to quaternary structure, interacts with RPL4. Associates with the 60S ribosomal subunits in an RNA-independent manner. In terms of processing, arg-103 is dimethylated, probably to asymmetric dimethylarginine. Post-translationally, phosphorylated.

It is found in the nucleus. It localises to the cytoplasm. The protein localises to the cell projection. The protein resides in the dendrite. In terms of biological role, cold-inducible mRNA binding protein that enhances global protein synthesis at both physiological and mild hypothermic temperatures. Reduces the relative abundance of microRNAs, when overexpressed. Enhances phosphorylation of translation initiation factors and active polysome formation. The chain is RNA-binding protein 3 (Rbm3) from Mus musculus (Mouse).